The chain runs to 86 residues: UPF0457 protein SAUSA300_2132 (86 aa).

Belongs to the UPF0457 family.

The polypeptide is UPF0457 protein SAUSA300_2132 (Staphylococcus aureus (strain USA300)).